The primary structure comprises 624 residues: Hemocyanin E chain (624 aa).

6 residues coordinate Cu cation: H169, H173, H200, H320, H324, and H360. N445 is a glycosylation site (N-linked (GlcNAc...) asparagine). Residues C529 and C577 are joined by a disulfide bond.

Belongs to the tyrosinase family. Hemocyanin subfamily. As to quaternary structure, tarantula hemocyanin is a 24-chain polymer with seven different chains identified. In terms of tissue distribution, hemolymph.

The protein resides in the secreted. The protein localises to the extracellular space. Its function is as follows. Hemocyanins are copper-containing oxygen carriers occurring freely dissolved in the hemolymph of many mollusks and arthropods. This chain is Hemocyanin E chain (HCE), found in Aphonopelma sp. (American tarantula).